The sequence spans 314 residues: Hydroxyacyl-coenzyme A dehydrogenase, mitochondrial (314 aa).

A mitochondrion-targeting transit peptide spans 1–12; it reads MAFVTRQFVRSM. NAD(+) contacts are provided by residues 34-39 and Asp57; that span reads GGGLMG. Ser73 lines the CoA pocket. An N6-acetyllysine modification is found at Lys75. Lys80 provides a ligand contact to CoA. N6-succinyllysine is present on Lys80. Residues Lys81 and Lys87 each carry the N6-acetyllysine; alternate modification. 2 positions are modified to N6-succinyllysine; alternate: Lys81 and Lys87. Glu122 is an NAD(+) binding site. Lys125 carries the post-translational modification N6-acetyllysine. Lys127 provides a ligand contact to NAD(+). The residue at position 127 (Lys127) is an N6-(2-hydroxyisobutyryl)lysine. At Lys136 the chain carries N6-acetyllysine; alternate. Lys136 is modified (N6-succinyllysine; alternate). The NAD(+) site is built by Ser149 and Asn173. Ser149 is a binding site for CoA. Lys179 is modified (N6-acetyllysine). N6-acetyllysine; alternate is present on residues Lys185, Lys192, and Lys202. Residues Lys185, Lys192, and Lys202 each carry the N6-succinyllysine; alternate modification. The residue at position 206 (Lys206) is an N6-succinyllysine. N6-acetyllysine; alternate occurs at positions 212 and 241. Residues Lys212 and Lys241 each carry the N6-succinyllysine; alternate modification. Lys305 contributes to the NAD(+) binding site. Residue Lys312 is modified to N6-acetyllysine; alternate. N6-succinyllysine; alternate is present on Lys312.

Belongs to the 3-hydroxyacyl-CoA dehydrogenase family. As to quaternary structure, homodimer. Interacts with GLUD1; this interaction inhibits the activation of glutamate dehydrogenase 1 (GLUD1). In terms of processing, succinylation at Lys-81, adjacent to a coenzyme A binding site. Desuccinylated by SIRT5.

It is found in the mitochondrion matrix. The enzyme catalyses a (3S)-3-hydroxyacyl-CoA + NAD(+) = a 3-oxoacyl-CoA + NADH + H(+). It catalyses the reaction (3S)-3-hydroxybutanoyl-CoA + NAD(+) = acetoacetyl-CoA + NADH + H(+). The catalysed reaction is (3S)-hydroxydecanoyl-CoA + NAD(+) = 3-oxodecanoyl-CoA + NADH + H(+). It carries out the reaction (3S)-hydroxyhexadecanoyl-CoA + NAD(+) = 3-oxohexadecanoyl-CoA + NADH + H(+). It participates in lipid metabolism; fatty acid beta-oxidation. Functionally, mitochondrial fatty acid beta-oxidation enzyme that catalyzes the third step of the beta-oxidation cycle for medium and short-chain 3-hydroxy fatty acyl-CoAs (C4 to C10). Plays a role in the control of insulin secretion by inhibiting the activation of glutamate dehydrogenase 1 (GLUD1), an enzyme that has an important role in regulating amino acid-induced insulin secretion. Plays a role in the maintenance of normal spermatogenesis through the reduction of fatty acid accumulation in the testes. This Rattus norvegicus (Rat) protein is Hydroxyacyl-coenzyme A dehydrogenase, mitochondrial (Hadh).